The primary structure comprises 765 residues: Probable serine/threonine-protein kinase DDB_G0271402 (765 aa).

The 294-residue stretch at Leu-35–Leu-328 folds into the Protein kinase domain. ATP is bound by residues Ile-41–Ile-49 and Lys-62. Residue Asp-192 is the Proton acceptor of the active site. Disordered regions lie at residues Ile-371–Asn-393, Ser-443–Asn-477, Ser-491–Ser-527, Pro-545–Gln-620, Pro-654–Leu-684, Ile-699–Ile-738, and Ala-746–Ser-765. Over residues Asp-446–Ser-458 the composition is skewed to acidic residues. Low complexity-rich tracts occupy residues Tyr-459–Ser-470, Asn-499–Ser-527, Pro-562–Asn-605, Asn-662–Asn-678, and Ile-699–Ser-720.

It belongs to the protein kinase superfamily. TKL Ser/Thr protein kinase family.

The enzyme catalyses L-seryl-[protein] + ATP = O-phospho-L-seryl-[protein] + ADP + H(+). It carries out the reaction L-threonyl-[protein] + ATP = O-phospho-L-threonyl-[protein] + ADP + H(+). This chain is Probable serine/threonine-protein kinase DDB_G0271402, found in Dictyostelium discoideum (Social amoeba).